The chain runs to 405 residues: Phosphopentomutase (405 aa).

Mn(2+) contacts are provided by aspartate 10, aspartate 303, histidine 308, aspartate 344, histidine 345, and histidine 356.

Belongs to the phosphopentomutase family. It depends on Mn(2+) as a cofactor.

The protein localises to the cytoplasm. It catalyses the reaction 2-deoxy-alpha-D-ribose 1-phosphate = 2-deoxy-D-ribose 5-phosphate. It carries out the reaction alpha-D-ribose 1-phosphate = D-ribose 5-phosphate. The protein operates within carbohydrate degradation; 2-deoxy-D-ribose 1-phosphate degradation; D-glyceraldehyde 3-phosphate and acetaldehyde from 2-deoxy-alpha-D-ribose 1-phosphate: step 1/2. Isomerase that catalyzes the conversion of deoxy-ribose 1-phosphate (dRib-1-P) and ribose 1-phosphate (Rib-1-P) to deoxy-ribose 5-phosphate (dRib-5-P) and ribose 5-phosphate (Rib-5-P), respectively. In Shewanella sediminis (strain HAW-EB3), this protein is Phosphopentomutase.